Here is a 90-residue protein sequence, read N- to C-terminus: Small ribosomal subunit protein uS15 (90 aa).

Belongs to the universal ribosomal protein uS15 family. As to quaternary structure, part of the 30S ribosomal subunit. Forms a bridge to the 50S subunit in the 70S ribosome, contacting the 23S rRNA.

One of the primary rRNA binding proteins, it binds directly to 16S rRNA where it helps nucleate assembly of the platform of the 30S subunit by binding and bridging several RNA helices of the 16S rRNA. Functionally, forms an intersubunit bridge (bridge B4) with the 23S rRNA of the 50S subunit in the ribosome. In Paraburkholderia xenovorans (strain LB400), this protein is Small ribosomal subunit protein uS15.